Here is a 438-residue protein sequence, read N- to C-terminus: Lipoyl synthase, mitochondrial (438 aa).

Residues 1–31 (MAASARGLRTLQSAHSSTTVPRLQLAVSRCY) constitute a mitochondrion transit peptide. Residues 34–57 (TTSPDPPITNSSNSSNSSNSTPTP) show a composition bias toward low complexity. Residues 34–58 (TTSPDPPITNSSNSSNSSNSTPTPK) form a disordered region. 7 residues coordinate [4Fe-4S] cluster: Cys148, Cys153, Cys159, Cys179, Cys183, Cys186, and Ser394. The 222-residue stretch at 162–383 (GSSKSAATAT…KERALEMGFL (222 aa)) folds into the Radical SAM core domain.

This sequence belongs to the radical SAM superfamily. Lipoyl synthase family. It depends on [4Fe-4S] cluster as a cofactor.

It localises to the mitochondrion. The catalysed reaction is [[Fe-S] cluster scaffold protein carrying a second [4Fe-4S](2+) cluster] + N(6)-octanoyl-L-lysyl-[protein] + 2 oxidized [2Fe-2S]-[ferredoxin] + 2 S-adenosyl-L-methionine + 4 H(+) = [[Fe-S] cluster scaffold protein] + N(6)-[(R)-dihydrolipoyl]-L-lysyl-[protein] + 4 Fe(3+) + 2 hydrogen sulfide + 2 5'-deoxyadenosine + 2 L-methionine + 2 reduced [2Fe-2S]-[ferredoxin]. It participates in protein modification; protein lipoylation via endogenous pathway; protein N(6)-(lipoyl)lysine from octanoyl-[acyl-carrier-protein]: step 2/2. Functionally, catalyzes the radical-mediated insertion of two sulfur atoms into the C-6 and C-8 positions of the octanoyl moiety bound to the lipoyl domains of lipoate-dependent enzymes, thereby converting the octanoylated domains into lipoylated derivatives. This Paracoccidioides brasiliensis (strain Pb18) protein is Lipoyl synthase, mitochondrial.